Consider the following 369-residue polypeptide: Dual specificity protein phosphatase 1-A (369 aa).

Residues 21 to 138 form the Rhodanese domain; sequence RAHKCLILDC…FSAQCPEFCT (118 aa). Threonine 168 bears the Phosphothreonine; by MAPK1 mark. Residues 175–316 form the Tyrosine-protein phosphatase domain; the sequence is GPVEILPFLY…LLQFESQVLA (142 aa). Residue cysteine 260 is the Phosphocysteine intermediate of the active site.

This sequence belongs to the protein-tyrosine phosphatase family. Non-receptor class dual specificity subfamily. In terms of processing, phosphorylated by MAPK1/ERK2 at Thr-168 and at one or more serine residues in a progesterone-dependent manner. Phosphorylation reduces its rate of degradation but does not seem to affect phosphatase activity. As to expression, expressed in XIK-2 kidney cells.

It localises to the nucleus. It carries out the reaction O-phospho-L-seryl-[protein] + H2O = L-seryl-[protein] + phosphate. The enzyme catalyses O-phospho-L-threonyl-[protein] + H2O = L-threonyl-[protein] + phosphate. The catalysed reaction is O-phospho-L-tyrosyl-[protein] + H2O = L-tyrosyl-[protein] + phosphate. Functionally, dual specificity phosphatase that dephosphorylates MAP kinase MAPK1/ERK2 on both 'Thr-188' and 'Tyr-190', regulating its activity during the meiotic cell cycle. The chain is Dual specificity protein phosphatase 1-A from Xenopus laevis (African clawed frog).